A 262-amino-acid chain; its full sequence is Small ribosomal subunit protein uS3 (262 aa).

The 69-residue stretch at 39-107 (VREFLKKKLK…PVHVNIEEIR (69 aa)) folds into the KH type-2 domain. The disordered stretch occupies residues 211-262 (NDAPVVEEPQEERRKRPGRPEGRRREGEGRPAGQRRGAGAGARRGTDAKTGE). The segment covering 221–239 (EERRKRPGRPEGRRREGEG) has biased composition (basic and acidic residues).

Belongs to the universal ribosomal protein uS3 family. As to quaternary structure, part of the 30S ribosomal subunit. Forms a tight complex with proteins S10 and S14.

Binds the lower part of the 30S subunit head. Binds mRNA in the 70S ribosome, positioning it for translation. This Ralstonia pickettii (strain 12J) protein is Small ribosomal subunit protein uS3.